Here is a 161-residue protein sequence, read N- to C-terminus: Non-secretory ribonuclease (161 aa).

The N-terminal stretch at 1 to 27 (MVPKLFTSQICLLLLLGLMGVEGSLHA) is a signal peptide. C-linked (Man) tryptophan glycosylation is present at Trp34. Residue His42 is the Proton acceptor of the active site. Asn44 carries an N-linked (GlcNAc...) asparagine glycan. 4 disulfide bridges follow: Cys50/Cys110, Cys64/Cys123, Cys82/Cys138, and Cys89/Cys98. Position 60 is a 3'-nitrotyrosine (Tyr60). 65–69 (KNQNT) is a binding site for substrate. Residues Asn86, Asn92, Asn111, and Asn119 are each glycosylated (N-linked (GlcNAc...) asparagine). The active-site Proton donor is His156.

This sequence belongs to the pancreatic ribonuclease family. Interacts with and forms a tight 1:1 complex with RNH1. Dimerization of two such complexes may occur.

It is found in the lysosome. The protein resides in the cytoplasmic granule. The catalysed reaction is an [RNA] containing cytidine + H2O = an [RNA]-3'-cytidine-3'-phosphate + a 5'-hydroxy-ribonucleotide-3'-[RNA].. It catalyses the reaction an [RNA] containing uridine + H2O = an [RNA]-3'-uridine-3'-phosphate + a 5'-hydroxy-ribonucleotide-3'-[RNA].. Its function is as follows. This is a non-secretory ribonuclease. It is a pyrimidine specific nuclease with a slight preference for U. Cytotoxin and helminthotoxin. Possesses a wide variety of biological activities. This is Non-secretory ribonuclease (RNASE2) from Nomascus leucogenys (Northern white-cheeked gibbon).